Consider the following 676-residue polypeptide: MLRRHGLFWLKTCPRLNVLLNQSIPIPHLLHSRDICQQRWYAKGKRRNQISKKELKPLNFSIPNYISVNKLANLLNCRVERLIKDLTALGFENITTTYILSKEYVELILQEYNFALPNLSTSTNLDNVYDELKSPVNPKLLTKRAPVVTIMGHVDHGKTTIIDYLRKSSVVAQEHGGITQHIGAFQITAPKSGKKITFLDTPGHAAFLKMRERGANITDIIVLVVSVEDSLMPQTLEAIKHAKNSGNEMIIAITKIDRIPQPKEREKKIEKVINDLIVQGIPVEKIGGDVQVIPISAKTGENMDLLEESIVLLSEVMDIRAENSPKTIAEGWIIESQVKKQVGNVATVLVKKGTLQKGKILICGNTFCKIKNLIDDKGIPILKATPSYATEVLGWKDVPHVGDEVIQVKSEAIAKKFISKRQDLIEVQKNSSIVEKLNEERALAKEQHLNKELEHENTVQEHEQNTGPKLINYIIKCDVSGSAEAVSESISSLGNDEVRCNVISSSVGIPTESDLKMAQITESTILCFNLGNLPSEVINNRAGIKIKQYNVIYKLIEDVTETLTENLKPIFEKKIVSTVDVRETFDFRLKKKIIRIAGCKVNNGVIKKNSLVQVVRGPNEDVIFDGKISTLKHNKDDVAEVSKGHECGITFESGFEGFKPGDKILVYENVRVPRYL.

Residues 143 to 326 (KRAPVVTIMG…MDIRAENSPK (184 aa)) form the tr-type G domain. A G1 region spans residues 152–159 (GHVDHGKT). Position 152 to 159 (152 to 159 (GHVDHGKT)) interacts with GTP. The interval 177 to 181 (GITQH) is G2. Residues 200–203 (DTPG) and 254–257 (TKID) contribute to the GTP site. The interval 200 to 203 (DTPG) is G3. The interval 254 to 257 (TKID) is G4. The G5 stretch occupies residues 296-298 (SAK).

This sequence belongs to the TRAFAC class translation factor GTPase superfamily. Classic translation factor GTPase family. IF-2 subfamily.

The protein resides in the mitochondrion. Its function is as follows. One of the essential components for the initiation of protein synthesis. Protects formylmethionyl-tRNA from spontaneous hydrolysis and promotes its binding to the 30S ribosomal subunits. Also involved in the hydrolysis of GTP during the formation of the 70S ribosomal complex. In Saccharomyces cerevisiae (strain ATCC 204508 / S288c) (Baker's yeast), this protein is Translation initiation factor IF-2, mitochondrial (IFM1).